Consider the following 623-residue polypeptide: Heterogeneous nuclear ribonucleoprotein Q (623 aa).

Position 2 is an N-acetylalanine (A2). S159 is modified (phosphoserine). RRM domains are found at residues 162–241, 243–325, and 338–408; these read TEIF…ISVA, NRLF…WADP, and KVLF…FAKP. Residue K168 forms a Glycyl lysine isopeptide (Lys-Gly) (interchain with G-Cter in SUMO2) linkage. K221 is modified (N6-acetyllysine). Position 363 is an N6-acetyllysine (K363). Phosphotyrosine is present on Y373. The interval 400–561 is interaction with APOBEC1; sequence NIEIVFAKPP…GARGGRGGNV (162 aa). R444 carries the asymmetric dimethylarginine; by PRMT1; alternate modification. R444 carries the omega-N-methylarginine; by PRMT1; alternate modification. 6 repeat units span residues 448 to 450, 451 to 453, 460 to 464, 469 to 472, 478 to 480, and 485 to 488. Residues 448–559 are 8 X 3 AA repeats of R-G-G; it reads RGGRGGYGYP…VRGARGGRGG (112 aa). Positions 460 to 488 are 3 X 4 AA repeats of Y-Y-G-Y; it reads YYGYEDYYDYYGYDYHNYRGGYEDPYYGY. R496 bears the Omega-N-methylarginine; by PRMT1 mark. The segment at 497–623 is disordered; the sequence is GRGGRGARGA…YQDTFGQQWK (127 aa). A 1-4 repeat occupies 498-500; that stretch reads RGG. Residues 504-522 show a composition bias toward low complexity; that stretch reads RGAAPSRGRGAAPPRGRAG. R510 is modified (asymmetric dimethylarginine; by PRMT1). R518 is modified (asymmetric dimethylarginine; by PRMT1; alternate). An Omega-N-methylarginine; by PRMT1; alternate modification is found at R518. The interval 518-549 is interaction with SMN; the sequence is RGRAGYSQRGGPGSARGVRGARGGAQQQRGRG. The residue at position 526 (R526) is an Asymmetric dimethylarginine; alternate. Residue R526 is modified to Omega-N-methylarginine; alternate. One copy of the 1-5 repeat lies at 526 to 528; the sequence is RGG. Asymmetric dimethylarginine; by PRMT1; alternate is present on residues R536 and R539. 2 positions are modified to omega-N-methylarginine; by PRMT1; alternate: R536 and R539. 3 repeat units span residues 539–541, 554–556, and 557–559. Gly residues predominate over residues 550-562; sequence VRGARGGRGGNVG. The Bipartite nuclear localization signal signature appears at 564–578; that stretch reads KRKADGYNQPDTKRR. A compositionally biased stretch (polar residues) spans 580-595; the sequence is TNNQNWGSQPIAQQPL. S587 is modified (phosphoserine). A Glycyl lysine isopeptide (Lys-Gly) (interchain with G-Cter in SUMO2) cross-link involves residue K607. Residues 611–623 show a composition bias toward polar residues; sequence QEFYQDTFGQQWK.

As to quaternary structure, identified in the spliceosome C complex. Component of the coding region determinant (CRD)-mediated complex, composed of DHX9, HNRNPU, IGF2BP1, SYNCRIP and YBX1. Identified in a mRNP complex, at least composed of DHX9, DDX3X, ELAVL1, HNRNPU, IGF2BP1, ILF3, PABPC1, PCBP2, PTBP2, STAU1, STAU2, SYNCRIP and YBX1. Identified in a mRNP granule complex, at least composed of ACTB, ACTN4, DHX9, ERG, HNRNPA1, HNRNPA2B1, HNRNPAB, HNRNPD, HNRNPL, HNRNPR, HNRNPU, HSPA1, HSPA8, IGF2BP1, ILF2, ILF3, NCBP1, NCL, PABPC1, PABPC4, PABPN1, RPLP0, RPS3, RPS3A, RPS4X, RPS8, RPS9, SYNCRIP, YBX1 and untranslated mRNAs. Interacts with GTPBP1. Isoform 1 is a component of the APOB mRNA editosome complex. Isoform 1 interacts with APOBEC1 and A1CF. Part of a complex associated with the FOS mCRD domain and consisting of PABPC1, PAIP1, CSDE1/UNR, HNRPD and SYNCRIP. Isoform 2 interacts with HNRPR. Interacts with POLR2A hyperphosphorylated C-terminal domain. Interacts with HABP4. Identified in a histone pre-mRNA complex, at least composed of ERI1, LSM11, SLBP, SNRPB, SYNCRIP and YBX1. Isoform 1 and isoform 2 interact with SMN. Isoform 2 interacts through its C-terminal domain with SYT7, SYT8 and SYT9. The non-phosphorylated and phosphorylated forms are colocalized with PAIP1 in polysomes. Post-translationally, phosphorylated on tyrosine. The membrane-bound form found in microsomes is phosphorylated in vitro by insulin receptor tyrosine kinase (INSR). Phosphorylation is inhibited upon binding to RNA, whereas the cytoplasmic form is poorly phosphorylated. In terms of tissue distribution, ubiquitous. Detected in heart, brain, spleen, lung, liver, skeletal muscle, adipocytes, kidney and testis.

It localises to the nucleus. It is found in the nucleoplasm. The protein resides in the microsome. The protein localises to the cytoplasm. In terms of biological role, heterogeneous nuclear ribonucleoprotein (hnRNP) implicated in mRNA processing mechanisms. Component of the CRD-mediated complex that promotes MYC mRNA stability. Isoform 1 and isoform 2 are associated in vitro with pre-mRNA, splicing intermediates and mature mRNA protein complexes. Isoform 1 binds to apoB mRNA AU-rich sequences. Isoform 1 is part of the APOB mRNA editosome complex and may modulate the postranscriptional C to U RNA-editing of the APOB mRNA through either by binding to A1CF (APOBEC1 complementation factor), to APOBEC1 or to RNA itself. May be involved in translationally coupled mRNA turnover. Implicated with other RNA-binding proteins in the cytoplasmic deadenylation/translational and decay interplay of the FOS mRNA mediated by the major coding-region determinant of instability (mCRD) domain. Interacts in vitro preferentially with poly(A) and poly(U) RNA sequences. Isoform 2 may be involved in cytoplasmic vesicle-based mRNA transport through interaction with synaptotagmins. This chain is Heterogeneous nuclear ribonucleoprotein Q (Syncrip), found in Mus musculus (Mouse).